A 553-amino-acid polypeptide reads, in one-letter code: Glutamine--tRNA ligase (553 aa).

Positions 34 to 44 (PEPNGYLHIGH) match the 'HIGH' region motif. Residues 35–37 (EPN) and 41–47 (HIGHAKS) contribute to the ATP site. 2 residues coordinate L-glutamine: D67 and Y212. ATP contacts are provided by residues T231, 261-262 (RL), and 269-271 (MSK). The 'KMSKS' region signature appears at 268–272 (IMSKR).

Belongs to the class-I aminoacyl-tRNA synthetase family. As to quaternary structure, monomer.

It localises to the cytoplasm. It carries out the reaction tRNA(Gln) + L-glutamine + ATP = L-glutaminyl-tRNA(Gln) + AMP + diphosphate. This Tolumonas auensis (strain DSM 9187 / NBRC 110442 / TA 4) protein is Glutamine--tRNA ligase.